Reading from the N-terminus, the 1321-residue chain is Bile salt export pump (1321 aa).

Topologically, residues 1 to 62 (MSDSVILRSV…FSSWTDIWLM (62 aa)) are cytoplasmic. The ABC transmembrane type-1 1 domain occupies 62-385 (MCMGSLCACI…ASPCLEAFAA (324 aa)). A helical transmembrane segment spans residues 63–83 (CMGSLCACIHGIAQPGVLLIF). Topologically, residues 84–147 (GTMTDVFIDY…MIRFAGYYAG (64 aa)) are extracellular. N-linked (GlcNAc...) asparagine glycans are attached at residues Asn-109, Asn-116, Asn-122, and Asn-125. Residues 148–168 (IGIAVLTTGYIQICFWGIAAA) traverse the membrane as a helical segment. The Cytoplasmic segment spans residues 169-215 (HQIQKMRKSYFRKIMRMGIGWVDCNSVGKLNTPFSVDFNKINDSSAD). Residues 216-236 (QLAIFIQGMTSPIFGFLVGFS) form a helical membrane-spanning segment. The Extracellular portion of the chain corresponds to 237-240 (QWWK). A helical membrane pass occupies residues 241–261 (LTLVIISVSPLIGLGAAIIGL). At 262–319 (SVSKFTDYELKAYAKAGSVADEVISSMRTVAAFGGEKKEVERYEKNLVFAQRWGIRKG) the chain is on the cytoplasmic side. A helical membrane pass occupies residues 320 to 340 (IVMGFFTGYMWCLIFFCYALA). Residues 341–353 (FWYGSKLVLEEGE) are Extracellular-facing. The chain crosses the membrane as a helical span at residues 354–374 (YSPGALVQIFLSVIIGALNLG). Topologically, residues 375 to 755 (NASPCLEAFA…KLNAPEWPYM (381 aa)) are cytoplasmic. The ABC transporter 1 domain maps to 420–656 (IEFHNVTFHY…KGVYFALVTL (237 aa)). 455-462 (GPSGAGKS) contributes to the ATP binding site. Thr-586 carries the phosphothreonine modification. Ser-587 bears the Phosphoserine mark. The interaction with HAX1 stretch occupies residues 651–672 (FALVTLQSQRNQGDQEENEKDA). The tract at residues 659 to 735 (QRNQGDQEEN…KDKDLPAQED (77 aa)) is disordered. Acidic residues predominate over residues 664–677 (DQEENEKDATEDDI). Phosphoserine occurs at positions 690, 701, and 704. The span at 714 to 731 (VEDHKSTHEEDRKDKDLP) shows a compositional bias: basic and acidic residues. In terms of domain architecture, ABC transmembrane type-1 2 spans 755 to 1043 (MLLGSMGAAV…ASSYTPSYAK (289 aa)). Residues 756 to 776 (LLGSMGAAVNGAVTPLYAFLF) traverse the membrane as a helical segment. Over 777–794 (SQILGTFSLPDKEEQRSQ) the chain is Extracellular. The chain crosses the membrane as a helical span at residues 795-815 (INGICLLFVTLGCVSFFTQFL). Over 816–869 (QGYTFAKSGELLTKRLRKFGFRAMLGQDIGWFDDLRNSPGALTTRLATDASQVQ) the chain is Cytoplasmic. The next 2 helical transmembrane spans lie at 870–890 (GATG…TVAM) and 891–911 (IIAF…FPFL). Over 912–979 (ALSGALQTKM…PYKMAIKKAN (68 aa)) the chain is Cytoplasmic. Residues 980–1000 (VYGLCFGFSQCITFIANSASY) traverse the membrane as a helical segment. Residues 1001 to 1011 (RYGGYLISNEG) lie on the Extracellular side of the membrane. Residues 1012 to 1032 (LHFSYVFRVISAVVLSATALG) traverse the membrane as a helical segment. The Cytoplasmic segment spans residues 1033 to 1321 (RASSYTPSYA…KLVTTGSPIS (289 aa)). The ABC transporter 2 domain occupies 1078–1316 (IDFVDCKFTY…KGAYYKLVTT (239 aa)). An ATP-binding site is contributed by 1113-1120 (GSSGCGKS). A phosphoserine mark is found at Ser-1214 and Ser-1321.

Belongs to the ABC transporter superfamily. ABCB family. Multidrug resistance exporter (TC 3.A.1.201) subfamily. As to quaternary structure, interacts with HAX1. Interacts with the adapter protein complex 2 (AP-2) throught AP2A2 or AP2A1; this interaction regulates cell membrane expression of ABCB11 through its internalization in a clathrin-dependent manner and its subsequent degradation. In terms of processing, N-glycosylated. Post-translationally, ubiquitinated; short-chain ubiquitination regulates cell-Surface expression of ABCB11. As to expression, expressed predominantly, if not exclusively in the liver, where it was further localized to the canalicular microvilli and to subcanalicular vesicles of the hepatocytes by in situ.

The protein localises to the apical cell membrane. Its subcellular location is the recycling endosome membrane. It is found in the endosome. The protein resides in the cell membrane. It carries out the reaction cholate(in) + ATP + H2O = cholate(out) + ADP + phosphate + H(+). The enzyme catalyses taurocholate(in) + ATP + H2O = taurocholate(out) + ADP + phosphate + H(+). The catalysed reaction is glycocholate(in) + ATP + H2O = glycocholate(out) + ADP + phosphate + H(+). It catalyses the reaction glycochenodeoxycholate(in) + ATP + H2O = glycochenodeoxycholate(out) + ADP + phosphate + H(+). It carries out the reaction taurochenodeoxycholate(in) + ATP + H2O = taurochenodeoxycholate(out) + ADP + phosphate + H(+). The enzyme catalyses glycoursodeoxycholate(in) + ATP + H2O = glycoursodeoxycholate(out) + ADP + phosphate + H(+). The catalysed reaction is tauroursodeoxycholate(in) + ATP + H2O = tauroursodeoxycholate(out) + ADP + phosphate + H(+). It catalyses the reaction taurodeoxycholate(in) + ATP + H2O = taurodeoxycholate(out) + ADP + phosphate + H(+). It carries out the reaction taurolithocholate 3-sulfate(in) + ATP + H2O = taurolithocholate 3-sulfate(out) + ADP + phosphate + H(+). The enzyme catalyses pravastatin(in) + ATP + H2O = pravastatin(out) + ADP + phosphate + H(+). Its activity is regulated as follows. The uptake of taurocholate is inhibited by taurolithocholate sulfate with an IC(50) of 9 uM. Pravastatin competitively inhibits the transport of taurocholic acid. Cyclosporin A, glibenclamide, rifampicin and troglitazonestrongly competitively inhibit the transport activity of taurocholate. The canalicular transport activity of taurocholate is strongly dependent on canalicular membrane cholesterol content. The uptake of taurocholate is increased by short- and medium-chain fatty acids. Cholesterol increases transport capacity of taurocholate without affecting the affinity for the substrate. In terms of biological role, catalyzes the transport of the major hydrophobic bile salts, such as taurine and glycine-conjugated cholic acid across the canalicular membrane of hepatocytes in an ATP-dependent manner, therefore participates in hepatic bile acid homeostasis and consequently to lipid homeostasis through regulation of biliary lipid secretion in a bile salts dependent manner. Transports taurine-conjugated bile salts more rapidly than glycine-conjugated bile salts. Also transports non-bile acid compounds, such as pravastatin and fexofenadine in an ATP-dependent manner and may be involved in their biliary excretion. This Oryctolagus cuniculus (Rabbit) protein is Bile salt export pump.